The following is a 123-amino-acid chain: Guanine nucleotide exchange factor MSS4 (123 aa).

M1 carries the post-translational modification N-acetylmethionine. An MSS4 domain is found at 9–123; it reads ELVSAEGRNR…YVALERVSHE (115 aa). Residues C23, C26, C94, and C97 each contribute to the Zn(2+) site.

It belongs to the DSS4/MSS4 family. In terms of assembly, interacts with RAB8A.

Guanine-nucleotide-releasing protein that acts on members of the SEC4/YPT1/RAB subfamily. Stimulates GDP release from both YPT1, RAB3A and RAB10, but is less active on these proteins than on the SEC4 protein. Might play a general role in vesicular transport. This is Guanine nucleotide exchange factor MSS4 from Mus musculus (Mouse).